A 165-amino-acid polypeptide reads, in one-letter code: uncharacterized protein (165 aa).

Helical transmembrane passes span 6–26, 28–48, 54–74, 78–98, 110–130, and 138–158; these read ILFPCLLLAASVYAWLESGQA, LFSGQDQWPVLLMLLGAAFVY, AVTPHFFIGLLLFGIGLHFFA, WVWWPDDFEMLLFMIGFSLLV, AVSMICFSLFLYFFKQIMAWL, and ALLKEYWPFVFIGISLLLLLI.

Its subcellular location is the cell membrane. This is an uncharacterized protein from Bacillus subtilis (strain 168).